Consider the following 389-residue polypeptide: Large envelope protein (389 aa).

Residue Met1 is modified to N-acetylmethionine. Residue Gly2 is the site of N-myristoyl glycine; by host attachment. The interval 2–108 is pre-S1; that stretch reads GQNLSTSNPL…PPLRTTHPQA (107 aa). The interval 2–163 is pre-S; that stretch reads GQNLSTSNPL…SSRIGDPALN (162 aa). The Virion surface; in external conformation segment spans residues 2-170; that stretch reads GQNLSTSNPL…ALNMENITSG (169 aa). At 2-242 the chain is on the intravirion; in internal conformation side; the sequence is GQNLSTSNPL…VGYRWMCLRR (241 aa). 2 disordered regions span residues 76-102 and 133-154; these read TLPANPPPASTNRQSGRQPTPLSPPLR and GGSSSGTVNPVPTTASPTLSTS. Polar residues predominate over residues 85–95; it reads STNRQSGRQPT. A pre-S2 region spans residues 109 to 163; sequence MQWNSTTFHQTLQDPRVRGLYLPAGGSSSGTVNPVPTTASPTLSTSSRIGDPALN. The segment covering 142–154 has biased composition (low complexity); that stretch reads PVPTTASPTLSTS. The helical transmembrane segment at 171 to 191 threads the bilayer; sequence FLGPLLVLQAGFFLLTRILTI. Residues 192-242 lie on the Intravirion; in external conformation side of the membrane; that stretch reads PQSLDSWWTSLSFLGGTTVCLGQNSQSPTSNHSPTSCPPTCVGYRWMCLRR. A helical membrane pass occupies residues 243–263; it reads FIIFLFILLLCLIFLLVLLDY. Over 264 to 337 the chain is Virion surface; sequence QGMLPVCPLI…WASARFSWLS (74 aa). The N-linked (GlcNAc...) asparagine; by host glycan is linked to Asn309. A helical membrane pass occupies residues 338–358; sequence LLVPFVQWFVGLSPTVWLSVI. Residues 359-364 lie on the Intravirion side of the membrane; sequence WMMWYW. A helical transmembrane segment spans residues 365–387; that stretch reads GPSLYNTLSPFLPLLPIFFYLWV. Residues 388–389 are Virion surface-facing; it reads YI.

The protein belongs to the orthohepadnavirus major surface antigen family. As to quaternary structure, in its internal form (Li-HBsAg), interacts with the capsid protein and with the isoform S. Interacts with host chaperone CANX. In terms of assembly, associates with host chaperone CANX through its pre-S2 N glycan; this association may be essential for isoform M proper secretion. Interacts with isoform L. Interacts with the antigens of satellite virus HDV (HDVAgs); this interaction is required for encapsidation of HDV genomic RNA. Post-translationally, isoform M is N-terminally acetylated by host at a ratio of 90%, and N-glycosylated by host at the pre-S2 region. Myristoylated.

It is found in the virion membrane. Functionally, the large envelope protein exists in two topological conformations, one which is termed 'external' or Le-HBsAg and the other 'internal' or Li-HBsAg. In its external conformation the protein attaches the virus to cell receptors and thereby initiating infection. This interaction determines the species specificity and liver tropism. This attachment induces virion internalization predominantly through caveolin-mediated endocytosis. The large envelope protein also assures fusion between virion membrane and endosomal membrane. In its internal conformation the protein plays a role in virion morphogenesis and mediates the contact with the nucleocapsid like a matrix protein. Its function is as follows. The middle envelope protein plays an important role in the budding of the virion. It is involved in the induction of budding in a nucleocapsid independent way. In this process the majority of envelope proteins bud to form subviral lipoprotein particles of 22 nm of diameter that do not contain a nucleocapsid. The polypeptide is Large envelope protein (Homo sapiens (Human)).